The following is a 259-amino-acid chain: Ribosome maturation factor RimP (259 aa).

The segment at Ser198 to Asp259 is disordered. The span at Leu243–Ile253 shows a compositional bias: basic and acidic residues.

The protein belongs to the RimP family.

It is found in the cytoplasm. Functionally, required for maturation of 30S ribosomal subunits. This is Ribosome maturation factor RimP from Rhodopseudomonas palustris (strain TIE-1).